The primary structure comprises 706 residues: Maternal embryonic leucine zipper kinase (706 aa).

The Protein kinase domain occupies 11–265 (YAVHDELGSG…VKKLLEHDWL (255 aa)). Residues 17–25 (LGSGGFGKV) and K40 contribute to the ATP site. Catalysis depends on D132, which acts as the Proton acceptor. Disordered stretches follow at residues 366–386 (LDKS…SSSD), 433–493 (FTGR…SRGP), and 506–555 (SVYT…IGSA). Polar residues-rich tracts occupy residues 447-461 (SVRS…SAAT) and 506-515 (SVYTTPNTRP). One can recognise a KA1 domain in the interval 656-705 (QETVHGWMTVELEIVRLQMFDKVGIRRKRLKGDAFMYKKVCEKILQMAKI).

Belongs to the protein kinase superfamily. CAMK Ser/Thr protein kinase family. SNF1 subfamily. Post-translationally, may be phosphorylated at Thr-169 by par-4 and/or autophosphorylated which likely results in its activation. Phosphorylation is not required for co-localization with the centrosome.

The protein resides in the cytoplasm. Its subcellular location is the cytoskeleton. It is found in the microtubule organizing center. The protein localises to the centrosome. It catalyses the reaction L-seryl-[protein] + ATP = O-phospho-L-seryl-[protein] + ADP + H(+). It carries out the reaction L-threonyl-[protein] + ATP = O-phospho-L-threonyl-[protein] + ADP + H(+). Its function is as follows. Serine/threonine-protein kinase involved in cell autonomous neuroblast asymmetric divisions that generate one precursor cell and one apoptotic cell by controlling spindle positioning, myosin distribution and the segregation of cell fate determinants. Plays a role in neural fate specification in several dopaminergic linages, acting in concert with ham-1. Involved in phosphorylation of multiple proteins associated with key developmental processes, including the cell cycle, apoptosis, endocytosis, and asymmetric cell division. Promotes cell shedding during embryogenesis, probably through the endocytosis-mediated removal of cell adhesion molecules such as hmp-1 from the cell surface. May act downstream of par-4/strd-1/mop-25 to regulate cell shedding. The polypeptide is Maternal embryonic leucine zipper kinase (Caenorhabditis elegans).